We begin with the raw amino-acid sequence, 954 residues long: Lysine-specific demethylase JMJ14 (954 aa).

The tract at residues 1–46 (MDQLASLAESVAMEEDSEKQSIKGESSLEPDSTPSSPKITARWNPS) is disordered. Residues 29–38 (EPDSTPSSPK) show a composition bias toward polar residues. In terms of domain architecture, JmjN spans 56–97 (APIFYPTNEDFDDPLGYIEKLRSKAESYGICRIVPPVAWRPP). The Nuclear localization signal 1 signature appears at 136–143 (RKRRRISK). Residues 148–170 (RRKRDSGCDTASSGSSDSEGKFG) form a disordered region. The JmjC domain maps to 263 to 429 (QYSQCGWNLN…HGQNAVEGYS (167 aa)). Residues His309, Glu311, and His397 each contribute to the Fe cation site. The Nuclear localization signal 2 signature appears at 470-477 (WKRVCSED). Zn(2+) contacts are provided by Cys519, Cys522, Cys533, Cys535, Cys542, His545, Cys550, and Cys552. The C5HC2 zinc-finger motif lies at 519–571 (CFLCFYDLHMSASSCKCSPNRFACLIHAKDLCSCESKDRYILIRHTLDELWAL). The interval 641–670 (SNKEVQLKQDGDSDVNRHGHESERNHVHGI) is disordered. A compositionally biased stretch (basic and acidic residues) spans 645-670 (VQLKQDGDSDVNRHGHESERNHVHGI). Residues 726-784 (ATNRLSLSVELLSSGSLVVKKLWCSKQAIYPKGFKSRVKFLSVLDPTNLTNYISEVLDA) form the FYR N-terminal domain. In terms of domain architecture, FYR C-terminal spans 786–876 (LLGPLFRVSV…HQLEEYWNQK (91 aa)). Positions 884–905 (EPIKEGEKDDTEKGGASDPSLD) are disordered. The segment covering 885–905 (PIKEGEKDDTEKGGASDPSLD) has biased composition (basic and acidic residues).

Belongs to the JARID1 histone demethylase family. Interacts with NAC050 and NAC051/NAC052. Interacts with THAL in the nucleus. It depends on Fe(2+) as a cofactor. As to expression, expressed in shoot apex, primary root tip, trichomes of young leaves, leaf vascular tissues, anther filaments and styles. Detected in inflorescences, leaves, stems, roots and siliques. Mostly expressed in floral organs, and, at low levels, in other organs.

The protein resides in the nucleus. Its subcellular location is the nucleoplasm. It catalyses the reaction N(6),N(6),N(6)-trimethyl-L-lysyl(4)-[histone H3] + 2-oxoglutarate + O2 = N(6),N(6)-dimethyl-L-lysyl(4)-[histone H3] + formaldehyde + succinate + CO2. The enzyme catalyses N(6),N(6)-dimethyl-L-lysyl(4)-[histone H3] + 2-oxoglutarate + O2 = N(6)-methyl-L-lysyl(4)-[histone H3] + formaldehyde + succinate + CO2. It carries out the reaction N(6)-methyl-L-lysyl(4)-[histone H3] + 2-oxoglutarate + O2 = L-lysyl(4)-[histone H3] + formaldehyde + succinate + CO2. The catalysed reaction is N(6),N(6),N(6)-trimethyl-L-lysyl(4)-[histone H3] + 3 2-oxoglutarate + 3 O2 = L-lysyl(4)-[histone H3] + 3 formaldehyde + 3 succinate + 3 CO2. In terms of biological role, transcriptional repressor. Histone demethylase that demethylates 'Lys-4' (H3K4me) of histone H3 with a higher activity for H3K4me3 and H3K4me2 than H3K4me1. No activity on H3K9me3/2, H3K36me3/2 and H3K27me3/2. Function as a nocturne 'eraser' to counteract the diurnal 'writer' methylase activity of ATXR3/SDG2 thus orchestrating the circadian rhythm of histone modifications (e.g. H3K4me3) and modulating the rhythmic expression of diurnal target genes; this mechanism also relies on the circadian clock oscillators CCA1 and LHY. Involved in a negative regulation of root meristem growth upon suboptimal root growth conditions. Represses FT and TSF expression to inhibit the floral transition. Binds around the transcription start site of the FT locus. Involved in the DRM2-mediated maintenance of DNA methylation, but not required for the de novo DNA methylation. Required for demethylating histone H3K4me3 at the target of RNA silencing. Counteracts the DNA methylation of expressed transgenes; specific attenuation of transgene DNA methylation enhances the production of aberrant RNAs (e.g. uncapped and antisense) that readily induce systemic RDR6-dependent post-transcriptional transgene silencing (PTGS) spreading. Together with NAC051/NAC052 and NAC050, regulates gene expression and flowering time, probably by the promotion of RNA-mediated gene silencing. Together with JMJ16 and JMJ17, required for plant growth and development. Promotes local and systemic immunity (especially toward the bacterial pathogen Pseudomonas syringae Pst DC3000 avrRpt2) by regulating positively pathogen-induced H3K4me3 enrichment and expression of defense genes involved in salicylic acid (SA)- and pipecolic acid (Pip)-mediated defense pathways (e.g. PR1, FMO1, ALD1 and SARD4). The protein is Lysine-specific demethylase JMJ14 of Arabidopsis thaliana (Mouse-ear cress).